The chain runs to 655 residues: p-hydroxybenzoic acid efflux pump subunit AaeB (655 aa).

The next 11 membrane-spanning stretches (helical) occupy residues 13 to 33, 38 to 58, 69 to 89, 93 to 113, 121 to 141, 152 to 172, 370 to 390, 407 to 427, 431 to 451, 459 to 479, and 482 to 502; these read FAVKLACAIVLALFIGFHFQL, WAVLTAAIVAAGPAFAAGGEP, LRIIGTFIGCIAALIIIISMI, LLMILVCCVWAGFCTWISSLV, WGLSGYTALIIVITIQTEPLL, EIVIGIGCAILADLLFSPRSI, LFWLWTGWTSGNGAMVMIAVV, FIYGTLAALPLGLLYFLVIIP, QSMLLLCLSLAVLGFFIGIEV, MGALASTINIIVLDNPMTFHF, and FLDSALGQIVGCMLAFIVILL.

The protein belongs to the aromatic acid exporter ArAE (TC 2.A.85) family.

It is found in the cell inner membrane. Forms an efflux pump with AaeA. Could function as a metabolic relief valve, allowing to eliminate certain compounds when they accumulate to high levels in the cell. In Salmonella agona (strain SL483), this protein is p-hydroxybenzoic acid efflux pump subunit AaeB.